The chain runs to 217 residues: Protein canopy 4 (217 aa).

Positions Met1–Cys27 are cleaved as a signal peptide. 3 disulfide bridges follow: Cys27–Cys185, Cys30–Cys173, and Cys83–Cys145. The disordered stretch occupies residues Met194–Leu217. Residues Gly205–Leu217 are compositionally biased toward basic and acidic residues.

It belongs to the canopy family.

It is found in the secreted. The polypeptide is Protein canopy 4 (cnpy4) (Danio rerio (Zebrafish)).